Consider the following 142-residue polypeptide: Large ribosomal subunit protein bL17 (142 aa).

Belongs to the bacterial ribosomal protein bL17 family. Part of the 50S ribosomal subunit. Contacts protein L32.

The chain is Large ribosomal subunit protein bL17 from Brucella canis (strain ATCC 23365 / NCTC 10854 / RM-666).